Consider the following 101-residue polypeptide: A-type ATP synthase subunit F (101 aa).

The protein belongs to the V-ATPase F subunit family. As to quaternary structure, has multiple subunits with at least A(3), B(3), C, D, E, F, H, I and proteolipid K(x).

The protein localises to the cell membrane. Component of the A-type ATP synthase that produces ATP from ADP in the presence of a proton gradient across the membrane. This chain is A-type ATP synthase subunit F, found in Archaeoglobus fulgidus (strain ATCC 49558 / DSM 4304 / JCM 9628 / NBRC 100126 / VC-16).